The following is a 153-amino-acid chain: uncharacterized protein (153 aa).

This is an uncharacterized protein from Escherichia coli (strain K12).